Reading from the N-terminus, the 356-residue chain is C-C chemokine receptor 1-like protein 1 (356 aa).

At 1-32 (MEIPAVTEPSYNTVAKNDFMSGFLCFSINVRA) the chain is on the extracellular side. The helical transmembrane segment at 33 to 60 (FGITVLTPLYSLVFIIGVIGHVLVVLVL) threads the bilayer. Topologically, residues 61 to 67 (IQHKRLR) are cytoplasmic. The chain crosses the membrane as a helical span at residues 68-92 (NMTSIYLFNLAISDLVFLSTLPFWV). Residues 93-108 (DYIMKGDWIFGNAMCK) are Extracellular-facing. Cysteine 107 and cysteine 184 are joined by a disulfide. The chain crosses the membrane as a helical span at residues 109-130 (FVSGFYYLGLYSDMFFITLLTI). At 131–147 (DRYLAVVHVVFALRART) the chain is on the cytoplasmic side. The helical transmembrane segment at 148-172 (VTFGIISSIITWVLAALVSIPCLYV) threads the bilayer. Residues 173–198 (FKSQMEFTYHTCRAILPRKSLIRFLR) are Extracellular-facing. The chain crosses the membrane as a helical span at residues 199 to 224 (FQALTMNILGLILPLLAMIICYTRII). The Cytoplasmic segment spans residues 225–240 (NVLHRRPNKKKAKVMR). A helical membrane pass occupies residues 241-265 (LIFVITLLFFLLLAPYYLAAFVSAF). The Extracellular segment spans residues 266 to 282 (EDVLFTPSCLRSQQVDL). Residues 283–306 (SLMITEALAYTHCCVNPVIYVFVG) traverse the membrane as a helical segment. The Cytoplasmic portion of the chain corresponds to 307–356 (KRFRKYLWQLFRRHTAITLPQWLPFLSVDRAQRASATPPSTVEIETSADL).

It belongs to the G-protein coupled receptor 1 family. As to expression, detected in the spleen, liver and leukocytes.

The protein resides in the cell membrane. Probable receptor for a C-C type chemokine. This Mus musculus (Mouse) protein is C-C chemokine receptor 1-like protein 1 (Ccr1l1).